Reading from the N-terminus, the 108-residue chain is Phosphoribosyl-ATP pyrophosphatase (108 aa).

It belongs to the PRA-PH family.

The protein resides in the cytoplasm. It catalyses the reaction 1-(5-phospho-beta-D-ribosyl)-ATP + H2O = 1-(5-phospho-beta-D-ribosyl)-5'-AMP + diphosphate + H(+). Its pathway is amino-acid biosynthesis; L-histidine biosynthesis; L-histidine from 5-phospho-alpha-D-ribose 1-diphosphate: step 2/9. The protein is Phosphoribosyl-ATP pyrophosphatase of Chromobacterium violaceum (strain ATCC 12472 / DSM 30191 / JCM 1249 / CCUG 213 / NBRC 12614 / NCIMB 9131 / NCTC 9757 / MK).